We begin with the raw amino-acid sequence, 306 residues long: tRNA dimethylallyltransferase (306 aa).

11–18 contacts ATP; sequence GPTAVGKS. Residue 13-18 participates in substrate binding; it reads TAVGKS. The interval 35–38 is interaction with substrate tRNA; that stretch reads DSIQ.

It belongs to the IPP transferase family. In terms of assembly, monomer. The cofactor is Mg(2+).

It carries out the reaction adenosine(37) in tRNA + dimethylallyl diphosphate = N(6)-dimethylallyladenosine(37) in tRNA + diphosphate. In terms of biological role, catalyzes the transfer of a dimethylallyl group onto the adenine at position 37 in tRNAs that read codons beginning with uridine, leading to the formation of N6-(dimethylallyl)adenosine (i(6)A). The polypeptide is tRNA dimethylallyltransferase (Borreliella burgdorferi (strain ATCC 35210 / DSM 4680 / CIP 102532 / B31) (Borrelia burgdorferi)).